The sequence spans 305 residues: Ribonuclease BN (305 aa).

His64, His66, Asp68, His69, His141, Asp212, and His270 together coordinate Zn(2+). Asp68 acts as the Proton acceptor in catalysis.

It belongs to the RNase Z family. RNase BN subfamily. As to quaternary structure, homodimer. Zn(2+) is required as a cofactor.

In terms of biological role, zinc phosphodiesterase, which has both exoribonuclease and endoribonuclease activities. The chain is Ribonuclease BN from Shigella boydii serotype 18 (strain CDC 3083-94 / BS512).